Here is a 280-residue protein sequence, read N- to C-terminus: Tobamovirus multiplication protein 2A (280 aa).

Residues 1 to 13 (MACRGCLECLLKL) are Cytoplasmic-facing. A helical transmembrane segment spans residues 14 to 34 (LNFLLAVAGLGMIGYGIYLFV). The Extracellular portion of the chain corresponds to 35-78 (EYKRVTDNSVTFDLTNGDQSYVSFGRPILMAVSLSSNIFDNLPK). Residues 79–99 (AWFIYLFIGIGVALFVISCCG) form a helical membrane-spanning segment. The Cytoplasmic portion of the chain corresponds to 100–113 (CVGTCSRSVCCLSC). Residues 114–134 (YSLLLILLILVELGFAAFIFF) form a helical membrane-spanning segment. Residues 135 to 162 (DNSWRDELPSDRTGNFDTIYNFLRENWK) are Extracellular-facing. Residues 163–183 (IVRWVALGAVVFEALLFLLAL) traverse the membrane as a helical segment. The Cytoplasmic segment spans residues 184–280 (MVRAANTPAE…NEEKGRCTIM (97 aa)). Residues S196 and S233 each carry the phosphoserine modification. A disordered region spans residues 258-280 (SESHRFQQMPAQPNEEKGRCTIM). Basic and acidic residues predominate over residues 271 to 280 (NEEKGRCTIM).

It belongs to the tetraspanin (TM4SF) family. Homodimer. Constituent of tobamovirus replication complex. Interacts with TOM1. As to expression, expressed in rosette leaves.

It is found in the vacuole membrane. Necessary for the efficient intracellular multiplication of tobamoviruses, being a component of the replication complex. This Arabidopsis thaliana (Mouse-ear cress) protein is Tobamovirus multiplication protein 2A (TOM2A).